Here is a 170-residue protein sequence, read N- to C-terminus: Translationally-controlled tumor protein homolog (170 aa).

Residues methionine 1 to cysteine 170 form the TCTP domain.

The protein belongs to the TCTP family.

The protein localises to the cytoplasm. Its function is as follows. Involved in calcium binding and microtubule stabilization. The chain is Translationally-controlled tumor protein homolog (tpt1) from Lateolabrax japonicus (Japanese sea perch).